Here is a 390-residue protein sequence, read N- to C-terminus: Argininosuccinate synthase (390 aa).

An ATP-binding site is contributed by 6-14 (SYSGGLDTT). Residue Tyr83 coordinates L-citrulline. Gly113 lines the ATP pocket. The L-aspartate site is built by Thr115, Asn119, and Asp120. Asn119 is an L-citrulline binding site. L-citrulline contacts are provided by Arg123, Ser169, Ser178, Glu254, and Tyr266.

This sequence belongs to the argininosuccinate synthase family. Type 1 subfamily. In terms of assembly, homotetramer.

It is found in the cytoplasm. It carries out the reaction L-citrulline + L-aspartate + ATP = 2-(N(omega)-L-arginino)succinate + AMP + diphosphate + H(+). It participates in amino-acid biosynthesis; L-arginine biosynthesis; L-arginine from L-ornithine and carbamoyl phosphate: step 2/3. The polypeptide is Argininosuccinate synthase (Archaeoglobus fulgidus (strain ATCC 49558 / DSM 4304 / JCM 9628 / NBRC 100126 / VC-16)).